We begin with the raw amino-acid sequence, 408 residues long: Putative gustatory receptor 58b (408 aa).

Residues Met1–Thr44 are Cytoplasmic-facing. The helical transmembrane segment at Tyr45–Pro65 threads the bilayer. Residues Arg66 to Asn82 are Extracellular-facing. The chain crosses the membrane as a helical span at residues Phe83 to Leu103. Topologically, residues Lys104–Ile150 are cytoplasmic. Residues Ile151–Ile171 traverse the membrane as a helical segment. The Extracellular portion of the chain corresponds to Asn172–Lys193. A helical membrane pass occupies residues Met194 to Ile214. Residues Asn215–Arg245 are Cytoplasmic-facing. A helical membrane pass occupies residues Ile246–Ile266. The Extracellular portion of the chain corresponds to Asn267–Gly284. Asn277 is a glycosylation site (N-linked (GlcNAc...) asparagine). A helical transmembrane segment spans residues Trp285–Met305. Residues Glu306–Pro364 lie on the Cytoplasmic side of the membrane. The chain crosses the membrane as a helical span at residues Ala365–Leu385. Residues Arg386–Val408 are Extracellular-facing. N-linked (GlcNAc...) asparagine glycosylation occurs at Asn404.

The protein belongs to the insect chemoreceptor superfamily. Gustatory receptor (GR) family. Gr22e subfamily. Expressed in the adult labellar chemosensory neurons, labral sense organ and thorax. In larvae, is in neurons of the terminal external chemosensory organ as well as in the dorsal pharyngeal sense organ.

It localises to the cell membrane. In terms of biological role, probable gustatory receptor which mediates acceptance or avoidance behavior, depending on its substrates. The polypeptide is Putative gustatory receptor 58b (Gr58b) (Drosophila melanogaster (Fruit fly)).